Reading from the N-terminus, the 457-residue chain is Multidrug resistance protein MdtK (457 aa).

The next 12 membrane-spanning stretches (helical) occupy residues 11–31 (LSAL…MGVV), 53–73 (IWLP…PVVA), 93–113 (FLAA…EYAI), 127–147 (AIGY…YQVL), 159–179 (PGMM…YIFI), 190–210 (GVGC…LMML), 249–269 (LLFE…LGVV), 276–296 (IALN…VATT), 313–333 (IAAH…AIFT), 357–377 (LMLL…GTGV), 387–407 (IFYI…YLLA), and 417–437 (GPAG…VMMV).

This sequence belongs to the multi antimicrobial extrusion (MATE) (TC 2.A.66.1) family. MdtK subfamily.

The protein localises to the cell inner membrane. In terms of biological role, multidrug efflux pump that functions probably as a Na(+)/drug antiporter. The protein is Multidrug resistance protein MdtK of Pectobacterium atrosepticum (strain SCRI 1043 / ATCC BAA-672) (Erwinia carotovora subsp. atroseptica).